The sequence spans 230 residues: Porin OmpL (230 aa).

The first 20 residues, Met-1–Ala-20, serve as a signal peptide directing secretion.

The protein belongs to the oligogalacturonate-specific porin KdgM (TC 1.B.35) family. OmpL subfamily.

The protein resides in the cell outer membrane. Outer membrane channel protein that allows an efficient diffusion of low-molecular-weight solutes such as small sugars and tetraglycine. However, the specific substrate recognized by the OmpL channel is unknown. This is Porin OmpL (ompL) from Salmonella typhimurium (strain LT2 / SGSC1412 / ATCC 700720).